Consider the following 275-residue polypeptide: Undecaprenyl-diphosphatase (275 aa).

A run of 7 helical transmembrane segments spans residues M1–V21, I41–A61, L95–F115, F118–T138, A192–V212, F223–I243, and L255–L275.

This sequence belongs to the UppP family.

The protein resides in the cell membrane. The catalysed reaction is di-trans,octa-cis-undecaprenyl diphosphate + H2O = di-trans,octa-cis-undecaprenyl phosphate + phosphate + H(+). Functionally, catalyzes the dephosphorylation of undecaprenyl diphosphate (UPP). Confers resistance to bacitracin. The polypeptide is Undecaprenyl-diphosphatase (Alkaliphilus metalliredigens (strain QYMF)).